The primary structure comprises 90 residues: DNA-directed RNA polymerase subunit omega (90 aa).

Residues 69-90 (RQEQQEQEAAELAAVSSIAHNR) form a disordered region.

The protein belongs to the RNA polymerase subunit omega family. The RNAP catalytic core consists of 2 alpha, 1 beta, 1 beta' and 1 omega subunit. When a sigma factor is associated with the core the holoenzyme is formed, which can initiate transcription.

The catalysed reaction is RNA(n) + a ribonucleoside 5'-triphosphate = RNA(n+1) + diphosphate. Functionally, promotes RNA polymerase assembly. Latches the N- and C-terminal regions of the beta' subunit thereby facilitating its interaction with the beta and alpha subunits. In Vibrio parahaemolyticus serotype O3:K6 (strain RIMD 2210633), this protein is DNA-directed RNA polymerase subunit omega.